The chain runs to 812 residues: Valine--tRNA ligase (812 aa).

A 'HIGH' region motif is present at residues 46-56 (PTVSGQLHIGH). A 'KMSKS' region motif is present at residues 536–540 (KMSKS). K539 serves as a coordination point for ATP.

The protein belongs to the class-I aminoacyl-tRNA synthetase family. ValS type 2 subfamily. As to quaternary structure, monomer.

Its subcellular location is the cytoplasm. The catalysed reaction is tRNA(Val) + L-valine + ATP = L-valyl-tRNA(Val) + AMP + diphosphate. In terms of biological role, catalyzes the attachment of valine to tRNA(Val). As ValRS can inadvertently accommodate and process structurally similar amino acids such as threonine, to avoid such errors, it has a 'posttransfer' editing activity that hydrolyzes mischarged Thr-tRNA(Val) in a tRNA-dependent manner. This is Valine--tRNA ligase from Rickettsia conorii (strain ATCC VR-613 / Malish 7).